The following is a 776-amino-acid chain: Endonuclease MutS2 (776 aa).

328–335 (GPNTGGKT) contributes to the ATP binding site. The region spanning 701-776 (LDLRGKRYEE…GSGATIVTFK (76 aa)) is the Smr domain.

It belongs to the DNA mismatch repair MutS family. MutS2 subfamily. Homodimer. Binds to stalled ribosomes, contacting rRNA.

Endonuclease that is involved in the suppression of homologous recombination and thus may have a key role in the control of bacterial genetic diversity. In terms of biological role, acts as a ribosome collision sensor, splitting the ribosome into its 2 subunits. Detects stalled/collided 70S ribosomes which it binds and splits by an ATP-hydrolysis driven conformational change. Acts upstream of the ribosome quality control system (RQC), a ribosome-associated complex that mediates the extraction of incompletely synthesized nascent chains from stalled ribosomes and their subsequent degradation. Probably generates substrates for RQC. This chain is Endonuclease MutS2, found in Streptococcus mutans serotype c (strain ATCC 700610 / UA159).